The sequence spans 895 residues: AP-1 complex subunit gamma (895 aa).

5 HEAT repeats span residues 130 to 166, 167 to 205, 211 to 256, 301 to 339, and 341 to 376; these read TAMA…LRKV, PDLT…MDST, KKMV…ILGQ, NGLK…TDIQ, and VQRH…ESNI. 3 disordered regions span residues 591 to 687, 706 to 733, and 746 to 770; these read KQEE…MNNM, NNNS…NNKS, and QLTP…QTSV. 5 stretches are compositionally biased toward low complexity: residues 604 to 626, 639 to 658, 675 to 687, 706 to 731, and 746 to 765; these read PTQT…QSSQ, QSSA…GGNA, NGNM…MNNM, NNNS…NNNN, and QLTP…LSPT. The 119-residue stretch at 775-893 folds into the GAE domain; that stretch reads PQPLTFLVYQ…SDVPDTPLPS (119 aa).

Belongs to the adaptor complexes large subunit family. As to quaternary structure, adaptor protein complex 1 (AP-1) is a heterotetramer composed of two large adaptins (gamma-type subunit and beta-type subunit), a medium adaptin (mu-type subunit) and a small adaptin (sigma-type subunit). Interacts with rhgA.

The protein localises to the golgi apparatus. Its subcellular location is the trans-Golgi network. The protein resides in the cytoplasmic vesicle. It is found in the clathrin-coated vesicle membrane. In terms of biological role, subunit of clathrin-associated adaptor protein complex 1 that plays a role in protein sorting in the trans-Golgi network (TGN) and endosomes. The AP complexes mediate the recruitment of clathrin to membranes and the recognition of sorting signals within the cytosolic tails of transmembrane cargo molecules. Also involved in early steps of phagocytosis and macropinocytosis. This chain is AP-1 complex subunit gamma (ap1g1), found in Dictyostelium discoideum (Social amoeba).